The chain runs to 265 residues: Tryptophan synthase alpha chain (265 aa).

Active-site proton acceptor residues include Glu-50 and Asp-61.

Belongs to the TrpA family. Tetramer of two alpha and two beta chains.

The enzyme catalyses (1S,2R)-1-C-(indol-3-yl)glycerol 3-phosphate + L-serine = D-glyceraldehyde 3-phosphate + L-tryptophan + H2O. Its pathway is amino-acid biosynthesis; L-tryptophan biosynthesis; L-tryptophan from chorismate: step 5/5. Functionally, the alpha subunit is responsible for the aldol cleavage of indoleglycerol phosphate to indole and glyceraldehyde 3-phosphate. In Trichodesmium erythraeum (strain IMS101), this protein is Tryptophan synthase alpha chain.